Reading from the N-terminus, the 2005-residue chain is Chitin synthase 8 (2005 aa).

The region spanning aspartate 5–arginine 773 is the Myosin motor domain. Position 108 to 115 (glycine 108 to serine 115) interacts with ATP. Residues asparagine 164, asparagine 364, asparagine 390, and asparagine 546 are each glycosylated (N-linked (GlcNAc...) asparagine). A disordered region spans residues glutamine 585–serine 631. Over residues aspartate 615 to aspartate 624 the composition is skewed to acidic residues. Residues leucine 647–aspartate 669 are actin-binding. Helical transmembrane passes span lysine 929 to phenylalanine 949 and leucine 965 to leucine 985. The N-linked (GlcNAc...) asparagine glycan is linked to asparagine 1076. 3 consecutive transmembrane segments (helical) span residues isoleucine 1232 to leucine 1252, leucine 1604 to isoleucine 1624, and leucine 1626 to valine 1646. The N-linked (GlcNAc...) asparagine glycan is linked to asparagine 1650. Helical transmembrane passes span valine 1653–leucine 1673 and methionine 1680–leucine 1700. Residues asparagine 1770 and asparagine 1794 are each glycosylated (N-linked (GlcNAc...) asparagine). The segment at serine 1796 to serine 1821 is disordered. Residues phenylalanine 1797 to glutamine 1811 show a composition bias toward polar residues. The N-linked (GlcNAc...) asparagine glycan is linked to asparagine 1882. Residues phenylalanine 1912–serine 1950 are disordered. The span at glutamine 1917 to leucine 1930 shows a compositional bias: low complexity. One can recognise a DEK-C domain in the interval leucine 1948 to serine 2003.

It in the N-terminal section; belongs to the TRAFAC class myosin-kinesin ATPase superfamily. Myosin family. This sequence in the C-terminal section; belongs to the chitin synthase family. Class V subfamily.

It localises to the cell membrane. It is found in the cytoplasmic vesicle membrane. The protein localises to the cell tip. The catalysed reaction is [(1-&gt;4)-N-acetyl-beta-D-glucosaminyl](n) + UDP-N-acetyl-alpha-D-glucosamine = [(1-&gt;4)-N-acetyl-beta-D-glucosaminyl](n+1) + UDP + H(+). Functionally, polymerizes chitin, a structural polymer of the cell wall and septum, by transferring the sugar moiety of UDP-GlcNAc to the non-reducing end of the growing chitin polymer. Involved in mating tube and dikaryotic hyphae formation and required for the formation of invading hyphae during plant infection. The sequence is that of Chitin synthase 8 from Mycosarcoma maydis (Corn smut fungus).